The primary structure comprises 356 residues: S-adenosylmethionine:tRNA ribosyltransferase-isomerase (356 aa).

Belongs to the QueA family. In terms of assembly, monomer.

The protein localises to the cytoplasm. It carries out the reaction 7-aminomethyl-7-carbaguanosine(34) in tRNA + S-adenosyl-L-methionine = epoxyqueuosine(34) in tRNA + adenine + L-methionine + 2 H(+). It participates in tRNA modification; tRNA-queuosine biosynthesis. Functionally, transfers and isomerizes the ribose moiety from AdoMet to the 7-aminomethyl group of 7-deazaguanine (preQ1-tRNA) to give epoxyqueuosine (oQ-tRNA). The polypeptide is S-adenosylmethionine:tRNA ribosyltransferase-isomerase (Cronobacter sakazakii (strain ATCC BAA-894) (Enterobacter sakazakii)).